The primary structure comprises 360 residues: C-C chemokine receptor type 4 (360 aa).

Over 1 to 39 the chain is Extracellular; it reads MNATEVTDTTQDETVYNSYYFYESMPKPCTKEGIKAFGE. The N-linked (GlcNAc...) asparagine glycan is linked to Asn-2. The chain crosses the membrane as a helical span at residues 40–67; the sequence is VFLPPLYSLVFLLGLFGNSVVVLVLFKY. Over 68 to 77 the chain is Cytoplasmic; that stretch reads KRLKSMTDVY. Residues 78–98 traverse the membrane as a helical segment; that stretch reads LLNLAISDLLFVLSLPFWGYY. Over 99–111 the chain is Extracellular; the sequence is AADQWVFGLGLCK. Cys-110 and Cys-187 are disulfide-bonded. Residues 112–133 traverse the membrane as a helical segment; it reads IVSWMYLVGFYSGIFFIMLMSI. Residues 134 to 150 lie on the Cytoplasmic side of the membrane; that stretch reads DRYLAIVHAVFSLKART. The helical transmembrane segment at 151-175 threads the bilayer; sequence LTYGVITSLITWSVAVFASLPGLLF. Over 176 to 206 the chain is Extracellular; the sequence is STCYTEHNHTYCKTQYSVNSTTWKVLSSLEI. Residues Asn-183 and Asn-194 are each glycosylated (N-linked (GlcNAc...) asparagine). A helical transmembrane segment spans residues 207-226; the sequence is NVLGLLIPLGIMLFCYSMII. The Cytoplasmic portion of the chain corresponds to 227 to 242; it reads RTLQHCKNEKKNRAVR. The chain crosses the membrane as a helical span at residues 243–267; it reads MIFAVVVLFLGFWTPYNVVLFLETL. The Extracellular segment spans residues 268-284; it reads VELEVLQDCTLERYLDY. A helical membrane pass occupies residues 285–308; it reads AIQATETLAFIHCCLNPVIYFFLG. Residues 309-360 lie on the Cytoplasmic side of the membrane; the sequence is EKFRKYITQLFRTCRGPLVLCKHCDFLQVYSADMSSSSYTQSTVDHDFRDAL.

Belongs to the G-protein coupled receptor 1 family. In terms of processing, in natural killer cells, CCL22 binding induces phosphorylation on yet undefined Ser/Thr residues, most probably by beta-adrenergic receptor kinases 1 and 2. In terms of tissue distribution, expressed in the thymus, macrophages and T- and B-cells.

The protein localises to the cell membrane. In terms of biological role, high affinity receptor for the C-C type chemokines CCL17/TARC and CCL22/MDC. The activity of this receptor is mediated by G(i) proteins which activate a phosphatidylinositol-calcium second messenger system. Could play a role in lipopolysaccharide (LPS)-induced endotoxic shock. In the CNS, could mediate hippocampal-neuron survival. The polypeptide is C-C chemokine receptor type 4 (Ccr4) (Mus musculus (Mouse)).